The following is a 400-amino-acid chain: Nicotinate phosphoribosyltransferase (400 aa).

A Phosphohistidine; by autocatalysis modification is found at His220.

It belongs to the NAPRTase family. Transiently phosphorylated on a His residue during the reaction cycle. Phosphorylation strongly increases the affinity for substrates and increases the rate of nicotinate D-ribonucleotide production. Dephosphorylation regenerates the low-affinity form of the enzyme, leading to product release.

The enzyme catalyses nicotinate + 5-phospho-alpha-D-ribose 1-diphosphate + ATP + H2O = nicotinate beta-D-ribonucleotide + ADP + phosphate + diphosphate. It functions in the pathway cofactor biosynthesis; NAD(+) biosynthesis; nicotinate D-ribonucleotide from nicotinate: step 1/1. Catalyzes the synthesis of beta-nicotinate D-ribonucleotide from nicotinate and 5-phospho-D-ribose 1-phosphate at the expense of ATP. In Salmonella heidelberg (strain SL476), this protein is Nicotinate phosphoribosyltransferase.